The primary structure comprises 401 residues: 8-amino-7-oxononanoate synthase (401 aa).

Position 19 (Arg19) interacts with substrate. 106–107 serves as a coordination point for pyridoxal 5'-phosphate; that stretch reads GY. Residue His131 participates in substrate binding. The pyridoxal 5'-phosphate site is built by Ser176, His204, and Thr233. Lys236 carries the N6-(pyridoxal phosphate)lysine modification. Thr350 contributes to the substrate binding site.

This sequence belongs to the class-II pyridoxal-phosphate-dependent aminotransferase family. BioF subfamily. Homodimer. It depends on pyridoxal 5'-phosphate as a cofactor.

It catalyses the reaction 6-carboxyhexanoyl-[ACP] + L-alanine + H(+) = (8S)-8-amino-7-oxononanoate + holo-[ACP] + CO2. The protein operates within cofactor biosynthesis; biotin biosynthesis. In terms of biological role, catalyzes the decarboxylative condensation of pimeloyl-[acyl-carrier protein] and L-alanine to produce 8-amino-7-oxononanoate (AON), [acyl-carrier protein], and carbon dioxide. This Pseudomonas paraeruginosa (strain DSM 24068 / PA7) (Pseudomonas aeruginosa (strain PA7)) protein is 8-amino-7-oxononanoate synthase.